The following is a 78-amino-acid chain: Small ribosomal subunit protein bS18B (78 aa).

It belongs to the bacterial ribosomal protein bS18 family. Part of the 30S ribosomal subunit. Forms a tight heterodimer with protein bS6.

Its function is as follows. Binds as a heterodimer with protein bS6 to the central domain of the 16S rRNA, where it helps stabilize the platform of the 30S subunit. The chain is Small ribosomal subunit protein bS18B from Streptomyces griseus subsp. griseus (strain JCM 4626 / CBS 651.72 / NBRC 13350 / KCC S-0626 / ISP 5235).